Reading from the N-terminus, the 335-residue chain is Anthranilate phosphoribosyltransferase (335 aa).

5-phospho-alpha-D-ribose 1-diphosphate is bound by residues Gly-79, 82-83, Thr-87, 89-92, 107-115, and Ser-119; these read GD, NVST, and KHCNKGVSS. Gly-79 serves as a coordination point for anthranilate. Ser-91 is a Mg(2+) binding site. Asn-110 is an anthranilate binding site. Arg-165 is a binding site for anthranilate. Mg(2+) contacts are provided by Asp-223 and Glu-224.

The protein belongs to the anthranilate phosphoribosyltransferase family. Homodimer. Mg(2+) is required as a cofactor.

The catalysed reaction is N-(5-phospho-beta-D-ribosyl)anthranilate + diphosphate = 5-phospho-alpha-D-ribose 1-diphosphate + anthranilate. It participates in amino-acid biosynthesis; L-tryptophan biosynthesis; L-tryptophan from chorismate: step 2/5. Catalyzes the transfer of the phosphoribosyl group of 5-phosphorylribose-1-pyrophosphate (PRPP) to anthranilate to yield N-(5'-phosphoribosyl)-anthranilate (PRA). This Buchnera aphidicola subsp. Schizaphis graminum (strain Sg) protein is Anthranilate phosphoribosyltransferase.